The primary structure comprises 488 residues: Malonate-semialdehyde dehydrogenase (488 aa).

The NAD(+) site is built by A150, F152, K176, E179, R180, S229, and T251. C284 (nucleophile) is an active-site residue. E382 provides a ligand contact to NAD(+).

The protein belongs to the aldehyde dehydrogenase family. IolA subfamily. As to quaternary structure, homotetramer.

The enzyme catalyses 3-oxopropanoate + NAD(+) + CoA + H2O = hydrogencarbonate + acetyl-CoA + NADH + H(+). The catalysed reaction is 2-methyl-3-oxopropanoate + NAD(+) + CoA + H2O = propanoyl-CoA + hydrogencarbonate + NADH + H(+). The protein operates within polyol metabolism; myo-inositol degradation into acetyl-CoA; acetyl-CoA from myo-inositol: step 7/7. Catalyzes the oxidation of malonate semialdehyde (MSA) and methylmalonate semialdehyde (MMSA) into acetyl-CoA and propanoyl-CoA, respectively. Is involved in a myo-inositol catabolic pathway. Bicarbonate, and not CO2, is the end-product of the enzymatic reaction. The sequence is that of Malonate-semialdehyde dehydrogenase from Listeria monocytogenes serotype 4b (strain CLIP80459).